The primary structure comprises 371 residues: UDP-N-acetylglucosamine--N-acetylmuramyl-(pentapeptide) pyrophosphoryl-undecaprenol N-acetylglucosamine transferase (371 aa).

UDP-N-acetyl-alpha-D-glucosamine contacts are provided by residues 15–17 (TGG), Asn-126, Arg-172, Ser-199, Ile-256, 275–280 (ALTVSE), and Gln-301.

The protein belongs to the glycosyltransferase 28 family. MurG subfamily.

Its subcellular location is the cell inner membrane. The catalysed reaction is di-trans,octa-cis-undecaprenyl diphospho-N-acetyl-alpha-D-muramoyl-L-alanyl-D-glutamyl-meso-2,6-diaminopimeloyl-D-alanyl-D-alanine + UDP-N-acetyl-alpha-D-glucosamine = di-trans,octa-cis-undecaprenyl diphospho-[N-acetyl-alpha-D-glucosaminyl-(1-&gt;4)]-N-acetyl-alpha-D-muramoyl-L-alanyl-D-glutamyl-meso-2,6-diaminopimeloyl-D-alanyl-D-alanine + UDP + H(+). It participates in cell wall biogenesis; peptidoglycan biosynthesis. In terms of biological role, cell wall formation. Catalyzes the transfer of a GlcNAc subunit on undecaprenyl-pyrophosphoryl-MurNAc-pentapeptide (lipid intermediate I) to form undecaprenyl-pyrophosphoryl-MurNAc-(pentapeptide)GlcNAc (lipid intermediate II). This chain is UDP-N-acetylglucosamine--N-acetylmuramyl-(pentapeptide) pyrophosphoryl-undecaprenol N-acetylglucosamine transferase, found in Francisella tularensis subsp. holarctica (strain FTNF002-00 / FTA).